The following is a 1017-amino-acid chain: Type VI secretion system spike protein VgrG3 (1017 aa).

The active site involves Asp-842.

It belongs to the VgrG protein family. As to quaternary structure, interacts with TsiV3. Interacts with TseL.

The protein resides in the secreted. Part of the type VI secretion system specialized secretion system, which delivers several virulence factors in both prokaryotic and eukaryotic cells during infection. Forms the spike at the tip of the elongating tube formed by haemolysin co-regulated protein Hcp. Allows the delivery of the TseL antibacterial toxin to target cells where it exerts its toxicity. Additionally, acts directly as an effector and targets the cell wall peptidoglycan layer of prey cells for degradation via its C-terminus. Toxicity is counteracted by a cognate immunity protein TsiV3. The polypeptide is Type VI secretion system spike protein VgrG3 (Vibrio cholerae serotype O1 (strain ATCC 39315 / El Tor Inaba N16961)).